We begin with the raw amino-acid sequence, 595 residues long: Chaperone protein HscA homolog (595 aa).

This sequence belongs to the heat shock protein 70 family.

In terms of biological role, chaperone involved in the maturation of iron-sulfur cluster-containing proteins. Has a low intrinsic ATPase activity which is markedly stimulated by HscB. This Rickettsia rickettsii (strain Iowa) protein is Chaperone protein HscA homolog.